Consider the following 254-residue polypeptide: Imidazole glycerol phosphate synthase subunit HisF (254 aa).

Active-site residues include Asp12 and Asp131.

This sequence belongs to the HisA/HisF family. In terms of assembly, heterodimer of HisH and HisF.

Its subcellular location is the cytoplasm. The catalysed reaction is 5-[(5-phospho-1-deoxy-D-ribulos-1-ylimino)methylamino]-1-(5-phospho-beta-D-ribosyl)imidazole-4-carboxamide + L-glutamine = D-erythro-1-(imidazol-4-yl)glycerol 3-phosphate + 5-amino-1-(5-phospho-beta-D-ribosyl)imidazole-4-carboxamide + L-glutamate + H(+). It functions in the pathway amino-acid biosynthesis; L-histidine biosynthesis; L-histidine from 5-phospho-alpha-D-ribose 1-diphosphate: step 5/9. Its function is as follows. IGPS catalyzes the conversion of PRFAR and glutamine to IGP, AICAR and glutamate. The HisF subunit catalyzes the cyclization activity that produces IGP and AICAR from PRFAR using the ammonia provided by the HisH subunit. This Leifsonia xyli subsp. xyli (strain CTCB07) protein is Imidazole glycerol phosphate synthase subunit HisF.